We begin with the raw amino-acid sequence, 189 residues long: Ion-translocating oxidoreductase complex subunit B (189 aa).

The interval 1 to 26 is hydrophobic; it reads MSGIFIAIILLTILALLFGILLGFAA. In terms of domain architecture, 4Fe-4S spans 32–90; it reads EGDPLVDQLEALLPQTQCGQCGYPGCRPYAEAIANGEKINLCPPGGSATMEKLAEMAGV. Residues C49, C52, C57, C73, C114, C117, C120, C124, C144, C147, C150, and C154 each contribute to the [4Fe-4S] cluster site. 2 4Fe-4S ferredoxin-type domains span residues 105 to 134 and 135 to 164; these read KVAYIREEECIGCTKCIQACPVDAILGSGK and LMHTVITDYCTGCDLCVAPCPVDCIDMLPV.

The protein belongs to the 4Fe4S bacterial-type ferredoxin family. RnfB subfamily. In terms of assembly, the complex is composed of six subunits: RnfA, RnfB, RnfC, RnfD, RnfE and RnfG. It depends on [4Fe-4S] cluster as a cofactor.

The protein localises to the cell inner membrane. Part of a membrane-bound complex that couples electron transfer with translocation of ions across the membrane. In Shewanella sediminis (strain HAW-EB3), this protein is Ion-translocating oxidoreductase complex subunit B.